The chain runs to 183 residues: Putative calmodulin-like protein 2 (183 aa).

EF-hand domains are found at residues glutamate 7 to serine 42, proline 43 to aspartate 78, glycine 80 to proline 115, and leucine 116 to glutamine 151. Ca(2+)-binding residues include aspartate 20, aspartate 22, aspartate 24, threonine 26, glutamate 31, aspartate 56, aspartate 58, serine 60, serine 62, glutamate 67, aspartate 93, aspartate 95, asparagine 97, glutamate 104, aspartate 129, aspartate 131, aspartate 133, glutamine 135, and glutamate 140. The segment at methionine 154 to leucine 183 is disordered. S-palmitoyl cysteine attachment occurs at residues cysteine 173 and cysteine 174. Position 180 is a cysteine methyl ester (cysteine 180). Residue cysteine 180 is the site of S-farnesyl cysteine attachment. A propeptide spans threonine 181–leucine 183 (removed in mature form).

The protein belongs to the calmodulin family.

Its subcellular location is the membrane. Functionally, potential calcium sensor. The sequence is that of Putative calmodulin-like protein 2 (CML2) from Oryza sativa subsp. japonica (Rice).